We begin with the raw amino-acid sequence, 192 residues long: Ribosomal RNA small subunit methyltransferase G (192 aa).

Residues Gly63, Phe68, 112-113 (IE), and Arg125 each bind S-adenosyl-L-methionine.

It belongs to the methyltransferase superfamily. RNA methyltransferase RsmG family.

It is found in the cytoplasm. It carries out the reaction guanosine(527) in 16S rRNA + S-adenosyl-L-methionine = N(7)-methylguanosine(527) in 16S rRNA + S-adenosyl-L-homocysteine. Its function is as follows. Specifically methylates the N7 position of guanine in position 527 of 16S rRNA. The sequence is that of Ribosomal RNA small subunit methyltransferase G from Rickettsia felis (strain ATCC VR-1525 / URRWXCal2) (Rickettsia azadi).